The sequence spans 427 residues: Trigger factor (427 aa).

Positions 163–248 constitute a PPIase FKBP-type domain; the sequence is GDTVVIDFVG…VNEVKAKEVP (86 aa).

The protein belongs to the FKBP-type PPIase family. Tig subfamily.

It localises to the cytoplasm. It carries out the reaction [protein]-peptidylproline (omega=180) = [protein]-peptidylproline (omega=0). Functionally, involved in protein export. Acts as a chaperone by maintaining the newly synthesized protein in an open conformation. Functions as a peptidyl-prolyl cis-trans isomerase. This chain is Trigger factor, found in Streptococcus thermophilus (strain CNRZ 1066).